Reading from the N-terminus, the 79-residue chain is Acyl carrier protein (79 aa).

The Carrier domain occupies 2 to 77 (SNIEERVKKI…QAIDYINAHA (76 aa)). At Ser-37 the chain carries O-(pantetheine 4'-phosphoryl)serine.

This sequence belongs to the acyl carrier protein (ACP) family. Post-translationally, 4'-phosphopantetheine is transferred from CoA to a specific serine of apo-ACP by AcpS. This modification is essential for activity because fatty acids are bound in thioester linkage to the sulfhydryl of the prosthetic group.

It is found in the cytoplasm. The protein operates within lipid metabolism; fatty acid biosynthesis. Its function is as follows. Carrier of the growing fatty acid chain in fatty acid biosynthesis. The sequence is that of Acyl carrier protein from Thioalkalivibrio sulfidiphilus (strain HL-EbGR7).